Reading from the N-terminus, the 765-residue chain is 5-methyltetrahydropteroyltriglutamate--homocysteine methyltransferase (765 aa).

5-methyltetrahydropteroyltri-L-glutamate is bound by residues arginine 18–lysine 21 and lysine 114. L-homocysteine is bound by residues isoleucine 437–serine 439 and glutamate 490. L-methionine contacts are provided by residues isoleucine 437 to serine 439 and glutamate 490. Position 567 (tryptophan 567) interacts with 5-methyltetrahydropteroyltri-L-glutamate. Residue aspartate 605 participates in L-homocysteine binding. An L-methionine-binding site is contributed by aspartate 605. Residue glutamate 611 coordinates 5-methyltetrahydropteroyltri-L-glutamate. Residues histidine 647, cysteine 649, and glutamate 671 each coordinate Zn(2+). Histidine 700 acts as the Proton donor in catalysis. Cysteine 732 contacts Zn(2+).

It belongs to the vitamin-B12 independent methionine synthase family. Zn(2+) serves as cofactor.

The enzyme catalyses 5-methyltetrahydropteroyltri-L-glutamate + L-homocysteine = tetrahydropteroyltri-L-glutamate + L-methionine. The protein operates within amino-acid biosynthesis; L-methionine biosynthesis via de novo pathway; L-methionine from L-homocysteine (MetE route): step 1/1. Functionally, catalyzes the transfer of a methyl group from 5-methyltetrahydrofolate to homocysteine resulting in methionine formation. The chain is 5-methyltetrahydropteroyltriglutamate--homocysteine methyltransferase from Listeria monocytogenes serotype 4b (strain F2365).